Consider the following 692-residue polypeptide: Elongation factor G (692 aa).

The tr-type G domain occupies 8 to 282 (AKTRNIGIMA…AVIDYLPSPL (275 aa)). GTP contacts are provided by residues 17–24 (AHVDAGKT), 81–85 (DTPGH), and 135–138 (NKMD).

It belongs to the TRAFAC class translation factor GTPase superfamily. Classic translation factor GTPase family. EF-G/EF-2 subfamily.

Its subcellular location is the cytoplasm. Catalyzes the GTP-dependent ribosomal translocation step during translation elongation. During this step, the ribosome changes from the pre-translocational (PRE) to the post-translocational (POST) state as the newly formed A-site-bound peptidyl-tRNA and P-site-bound deacylated tRNA move to the P and E sites, respectively. Catalyzes the coordinated movement of the two tRNA molecules, the mRNA and conformational changes in the ribosome. The protein is Elongation factor G of Streptococcus uberis (strain ATCC BAA-854 / 0140J).